The following is a 354-amino-acid chain: MQTYGNPDVTYDYWAGNASVTNRSGRFIASHAAHTGMIAFGAGSNTLFELSRFDSSLPMGDQGFVFLPHLASVGIGFDEAGVWTGAGVVTLAILHLILSMVYGAGGLLHAIYFPDDMQKSNVPQARKFKLEWDNPDNQTFILGHHLILFGLACAWFVEWARIHGIYDPAIGAVRQVNYNLDLSMIWERQVNFLNIDSLEDVMGGHAFLAFAEITGGCFHAIAGSTKWEDKRLGEYDRLKGAGLLSAEAILSFSLAGIGWMAIVAAFWCSQNTTVYPIEFYGEPLNRAFVIAPAFVDSIDYSNGIAPLGHSGRCYTANFHYIAGFFAFQGHLWHALRAMGYNFKDLRAKLNPSAA.

The next 6 helical transmembrane spans lie at 27 to 47, 88 to 108, 140 to 160, 201 to 221, 248 to 268, and 315 to 335; these read FIASHAAHTGMIAFGAGSNTL, VVTLAILHLILSMVYGAGGLL, FILGHHLILFGLACAWFVEWA, VMGGHAFLAFAEITGGCFHAI, AILSFSLAGIGWMAIVAAFWC, and TANFHYIAGFFAFQGHLWHAL.

It belongs to the PsbB/PsbC family. IsiA/Pcb subfamily. In terms of assembly, the antenna complex consists of divinyl chlorophylls (a and b) and divinyl chlorophyll a/b binding proteins and binds more divinyl chlorophyll b than does the antenna complex from high-light-adapted Prochlorococcus. It depends on divinyl chlorophyll a as a cofactor. The cofactor is divinyl chlorophyll b.

Its subcellular location is the cellular thylakoid membrane. In terms of biological role, the antenna complex functions as a light receptor, it captures and delivers excitation energy to photosystems II and I. The Prochlorales pcb genes are not related to higher plant LHCs. In Prochlorococcus marinus (strain SARG / CCMP1375 / SS120), this protein is Divinyl chlorophyll a/b light-harvesting protein PcbF (pcbF).